Here is a 94-residue protein sequence, read N- to C-terminus: Large ribosomal subunit protein bL27 (94 aa).

A propeptide spanning residues 1 to 9 (MLELNLQLF) is cleaved from the precursor. Residues 12–33 (KKGGGSTSNGRDSQAKRLGAKA) form a disordered region.

It belongs to the bacterial ribosomal protein bL27 family. In terms of processing, the N-terminus is cleaved by ribosomal processing cysteine protease Prp.

This chain is Large ribosomal subunit protein bL27, found in Lactococcus lactis subsp. lactis (strain IL1403) (Streptococcus lactis).